A 148-amino-acid polypeptide reads, in one-letter code: Large ribosomal subunit protein bL9 (148 aa).

The protein belongs to the bacterial ribosomal protein bL9 family.

Functionally, binds to the 23S rRNA. The polypeptide is Large ribosomal subunit protein bL9 (Alkaliphilus oremlandii (strain OhILAs) (Clostridium oremlandii (strain OhILAs))).